Here is a 693-residue protein sequence, read N- to C-terminus: Elongation factor G (693 aa).

The 275-residue stretch at 8-282 (KNTRNIGIMA…AVIDYLPSPL (275 aa)) folds into the tr-type G domain. GTP contacts are provided by residues 17–24 (AHIDAGKT), 81–85 (DTPGH), and 135–138 (NKMD).

Belongs to the TRAFAC class translation factor GTPase superfamily. Classic translation factor GTPase family. EF-G/EF-2 subfamily.

It is found in the cytoplasm. Its function is as follows. Catalyzes the GTP-dependent ribosomal translocation step during translation elongation. During this step, the ribosome changes from the pre-translocational (PRE) to the post-translocational (POST) state as the newly formed A-site-bound peptidyl-tRNA and P-site-bound deacylated tRNA move to the P and E sites, respectively. Catalyzes the coordinated movement of the two tRNA molecules, the mRNA and conformational changes in the ribosome. In Staphylococcus intermedius, this protein is Elongation factor G.